A 436-amino-acid polypeptide reads, in one-letter code: ATP-dependent RNA helicase RhlB (436 aa).

The short motif at 9-37 (QKFADFPLHKEVHQALNEAGFEFCTPIQA) is the Q motif element. Positions 40 to 219 (LPILLEKKDI…YDHMNEPEKV (180 aa)) constitute a Helicase ATP-binding domain. 53 to 60 (AQTGTGKT) contributes to the ATP binding site. A DEAD box motif is present at residues 165 to 168 (DEAD). Residues 243–390 (KMPLLLSLLE…VTSYDSDALL (148 aa)) enclose the Helicase C-terminal domain. The tract at residues 392–436 (DIPPPVRIHRKPSTHTRNTRDRGASRPQGGQRSGPRRHDRTRRHS) is disordered. Basic residues predominate over residues 425–436 (GPRRHDRTRRHS).

The protein belongs to the DEAD box helicase family. RhlB subfamily. As to quaternary structure, component of the RNA degradosome, which is a multiprotein complex involved in RNA processing and mRNA degradation.

The protein localises to the cytoplasm. It carries out the reaction ATP + H2O = ADP + phosphate + H(+). In terms of biological role, DEAD-box RNA helicase involved in RNA degradation. Has RNA-dependent ATPase activity and unwinds double-stranded RNA. In Shewanella halifaxensis (strain HAW-EB4), this protein is ATP-dependent RNA helicase RhlB.